The following is a 602-amino-acid chain: Major facilitator superfamily multidrug transporter mfsB (602 aa).

12 helical membrane passes run 29 to 49 (FVLA…FPYV), 67 to 87 (LYAG…GMFW), 98 to 118 (PVLI…GFAP), 128 to 148 (ALGG…AEIV), 160 to 180 (IMPF…GALA), 201 to 221 (FLLP…VGFL), 329 to 349 (IVAY…IPVF), 378 to 398 (FMLA…FPFV), 411 to 431 (VLLV…LPSI), 439 to 459 (LALI…AILL), 468 to 486 (VLGS…SRAL), and 505 to 525 (IIAW…SFWM). Residues 527–602 (ESEPRRDSEK…RSNPLAFAED (76 aa)) form a disordered region. Positions 528 to 538 (SEPRRDSEKAG) are enriched in basic and acidic residues.

Belongs to the major facilitator superfamily.

The protein localises to the membrane. Major facilitator superfamily transporter that may be involved in A.fumigatus adaptation to azoles such as vorizonazole. This is Major facilitator superfamily multidrug transporter mfsB from Aspergillus fumigatus (strain ATCC MYA-4609 / CBS 101355 / FGSC A1100 / Af293) (Neosartorya fumigata).